The primary structure comprises 243 residues: Vimentin A2 (243 aa).

The interval 1-22 is coil 1B; the sequence is GFSLQDELDFLKKLHDEELADV. In terms of domain architecture, IF rod spans 1 to 188; that stretch reads GFSLQDELDF…KLLEGEESRI (188 aa). Residues 23–45 are linker 12; that stretch reads QAQIQDQQVQVDMDMAKPDLTAA. The interval 46-184 is coil 2; that stretch reads LRDVRLQYEN…ATYRKLLEGE (139 aa). The interval 185-243 is tail; sequence ESRITTPLPNLSSFNLRDAILETKPILENTFSKKVLIKTIETRDGEVINESTQNHDDLE.

The protein belongs to the intermediate filament family. In terms of assembly, homomer. In terms of processing, one of the most prominent phosphoproteins in various cells of mesenchymal origin. Phosphorylation is enhanced during cell division, at which time vimentin filaments are significantly reorganized. In terms of tissue distribution, expressed in low amounts in retina, optic nerve, and brain and in higher amounts in spinal cord.

Functionally, vimentins are class-III intermediate filaments found in various non-epithelial cells, especially mesenchymal cells. Vimentin is attached to the nucleus, endoplasmic reticulum, and mitochondria, either laterally or terminally. In Carassius auratus (Goldfish), this protein is Vimentin A2.